We begin with the raw amino-acid sequence, 271 residues long: Fork head domain-containing protein FD5 (271 aa).

The fork-head DNA-binding region spans 12–103; that stretch reads QKPPYSYISL…FDMFENGSLL (92 aa).

In terms of tissue distribution, expressed in early embryogenesis in 14 symmetrical pairs of segmentally arranged neuroblasts and in developing peripheral nervous system. Also, later in embryogenesis, in a cluster of cells in head region.

The protein resides in the nucleus. In terms of biological role, involved in development during embryogenesis. The chain is Fork head domain-containing protein FD5 (fd96Cb) from Drosophila melanogaster (Fruit fly).